We begin with the raw amino-acid sequence, 860 residues long: Leucine--tRNA ligase (860 aa).

A 'HIGH' region motif is present at residues 42–52; the sequence is PYPSGRLHMGH. A 'KMSKS' region motif is present at residues 619 to 623; sequence KMSKS. Lysine 622 is an ATP binding site.

This sequence belongs to the class-I aminoacyl-tRNA synthetase family.

It is found in the cytoplasm. It carries out the reaction tRNA(Leu) + L-leucine + ATP = L-leucyl-tRNA(Leu) + AMP + diphosphate. The polypeptide is Leucine--tRNA ligase (Yersinia pestis bv. Antiqua (strain Angola)).